A 305-amino-acid chain; its full sequence is Protoheme IX farnesyltransferase (305 aa).

Helical transmembrane passes span 31-51, 52-72, 96-118, 123-145, 151-171, 179-199, 225-245, 247-267, and 281-301; these read VMSLVIFTGFVGMWLAPYSVH, PFIAGIAVVCIALGAGSAGAI, VIESDEALSFGLITGFFAVFFMA, LLASFLLLFTIFYYICIYTIWLK, NIVIGGVSGALPPVIGYAAVS, IILFLIIFIWTPPHSWALALF, ILIYSILLFIVSLMPFFIGMN, FIYLIISGILGVVFLYYAGSL, and FAYSIFYLFFIFLLLYSTNTI.

The protein belongs to the UbiA prenyltransferase family. Protoheme IX farnesyltransferase subfamily.

Its subcellular location is the cell membrane. It catalyses the reaction heme b + (2E,6E)-farnesyl diphosphate + H2O = Fe(II)-heme o + diphosphate. The protein operates within porphyrin-containing compound metabolism; heme O biosynthesis; heme O from protoheme: step 1/1. In terms of biological role, converts heme B (protoheme IX) to heme O by substitution of the vinyl group on carbon 2 of heme B porphyrin ring with a hydroxyethyl farnesyl side group. In Rickettsia africae (strain ESF-5), this protein is Protoheme IX farnesyltransferase.